A 167-amino-acid chain; its full sequence is Urease accessory protein UreE (167 aa).

A disordered region spans residues 135-167 (SGAYGGGHHHSHSHHEGDEFHSKPRLHHFGGSQ). Over residues 157–167 (KPRLHHFGGSQ) the composition is skewed to basic residues.

It belongs to the UreE family.

Its subcellular location is the cytoplasm. In terms of biological role, involved in urease metallocenter assembly. Binds nickel. Probably functions as a nickel donor during metallocenter assembly. The chain is Urease accessory protein UreE from Nitrosococcus oceani (strain ATCC 19707 / BCRC 17464 / JCM 30415 / NCIMB 11848 / C-107).